Consider the following 264-residue polypeptide: MAATAAALAVTDELALPLRAVGDLAAAAGFSREEVVVITQCASLGGKLPFDDASVGSVLAVIKKVENLGDLFITEISRVLKAGGMVLIQSSPSDQDPNNSIQRKLLLGGFVDVQASAASSQDSEHSVTIKAKKVSWSMGSSFPLKKATKGLPKIQIDDDSELIDEDSLLTEDDLKKPELPVVGDCEVGATRKACKNCTCGRAEAEEKVEKLNLTSEQINNPQSACGNCGLGDAFRCGTCPYRGLPAFKPGEKIALPGNFLAADL.

Residues 1 to 142 (MAATAAALAV…KVSWSMGSSF (142 aa)) form an N-terminal SAM-like domain region. Residues 143 to 174 (PLKKATKGLPKIQIDDDSELIDEDSLLTEDDL) are linker. The [2Fe-2S] cluster site is built by C185, C194, C197, and C199. Positions 185 to 199 (CEVGATRKACKNCTC) are fe-S binding site A. [4Fe-4S] cluster contacts are provided by C225, C228, C236, and C239. 2 short sequence motifs (cx2C motif) span residues 225 to 228 (CGNC) and 236 to 239 (CGTC). Residues 225–239 (CGNCGLGDAFRCGTC) are fe-S binding site B.

It belongs to the anamorsin family. As to quaternary structure, monomer. Requires [2Fe-2S] cluster as cofactor. [4Fe-4S] cluster serves as cofactor.

It is found in the cytoplasm. It localises to the mitochondrion intermembrane space. Component of the cytosolic iron-sulfur (Fe-S) protein assembly (CIA) machinery. Required for the maturation of extramitochondrial Fe-S proteins. Part of an electron transfer chain functioning in an early step of cytosolic Fe-S biogenesis, facilitating the de novo assembly of a [4Fe-4S] cluster on the cytosolic Fe-S scaffold complex. Electrons are transferred from NADPH via a FAD- and FMN-containing diflavin oxidoreductase. Together with the diflavin oxidoreductase, also required for the assembly of the diferric tyrosyl radical cofactor of ribonucleotide reductase (RNR), probably by providing electrons for reduction during radical cofactor maturation in the catalytic small subunit. The sequence is that of Anamorsin homolog 2 from Oryza sativa subsp. japonica (Rice).